A 319-amino-acid chain; its full sequence is MTEFLTAAFYKFVELPDFAQLKAPLLTCCEANDVKGTILLATEGINSTIAGPAVGVHAVLAYLRRDPRLADLQHKEAWSAKAPFYRMKVRLKREIVTMGVPGIDPNLVVGTYVKPQDWNALIGDPDVVVIDTRNDYEVGIGTFAGAVNPDIQSFAMLPQWLAQAPALHPATGKKPKVAMFCTGGIRCEKSTALLRAQGFDEVFHLEGGILKYLETIPPEQSLWQGQCFVFDERVSVGHGLIPGQHDLCRACRQPLDDADLASPLFEAGVSCPKCHAITRDIQKDGARERQRQWELAKARQQVHIGASPEPKAMPATAGR.

A Rhodanese domain is found at 123 to 221; sequence GDPDVVVIDT…YLETIPPEQS (99 aa). Cys181 serves as the catalytic Cysteine persulfide intermediate. Positions 298–319 are disordered; it reads ARQQVHIGASPEPKAMPATAGR.

It belongs to the TrhO family.

The catalysed reaction is uridine(34) in tRNA + AH2 + O2 = 5-hydroxyuridine(34) in tRNA + A + H2O. Catalyzes oxygen-dependent 5-hydroxyuridine (ho5U) modification at position 34 in tRNAs. This Albidiferax ferrireducens (strain ATCC BAA-621 / DSM 15236 / T118) (Rhodoferax ferrireducens) protein is tRNA uridine(34) hydroxylase.